Consider the following 56-residue polypeptide: Large ribosomal subunit protein bL32 (56 aa).

Over residues 1–16 the composition is skewed to basic residues; that stretch reads MAVQKNKKSRSKRGMR. The interval 1 to 36 is disordered; it reads MAVQKNKKSRSKRGMRRSHDSLSTPQLSVDSTSGEL. Positions 21–34 are enriched in polar residues; the sequence is SLSTPQLSVDSTSG.

The protein belongs to the bacterial ribosomal protein bL32 family.

This is Large ribosomal subunit protein bL32 from Shewanella sediminis (strain HAW-EB3).